The following is a 713-amino-acid chain: Polyribonucleotide nucleotidyltransferase (713 aa).

The Mg(2+) site is built by D494 and D500. One can recognise a KH domain in the interval 561–623 (PSFSTMTIPK…EAVQSAEKRV (63 aa)). The 70-residue stretch at 633–702 (GDVYQGTVKS…KSGKYKLSRK (70 aa)) folds into the S1 motif domain.

The protein belongs to the polyribonucleotide nucleotidyltransferase family. It depends on Mg(2+) as a cofactor.

The protein resides in the cytoplasm. The enzyme catalyses RNA(n+1) + phosphate = RNA(n) + a ribonucleoside 5'-diphosphate. Functionally, involved in mRNA degradation. Catalyzes the phosphorolysis of single-stranded polyribonucleotides processively in the 3'- to 5'-direction. The protein is Polyribonucleotide nucleotidyltransferase of Amoebophilus asiaticus (strain 5a2).